We begin with the raw amino-acid sequence, 427 residues long: Mitochondrial distribution and morphology protein 12 (427 aa).

The 387-residue stretch at 1 to 387 (MSFDINWNQL…WPSWICIDMN (387 aa)) folds into the SMP-LTD domain. The span at 81–96 (NDSKDEHLKNHGDGIN) shows a compositional bias: basic and acidic residues. 2 disordered regions span residues 81–168 (NDSK…APPL) and 387–427 (NDDD…EAGE). Residues 106–133 (LDDEDEDDEDDDEDDEDEEEEDEDDYDD) are compositionally biased toward acidic residues. The segment covering 146 to 161 (LNFNENSTTPSANSFA) has biased composition (polar residues). The segment covering 387–402 (NDDDDEEEEEESEDND) has biased composition (acidic residues). Basic and acidic residues predominate over residues 411 to 427 (NDGKHGDGRTDETEAGE).

It belongs to the MDM12 family. As to quaternary structure, component of the ER-mitochondria encounter structure (ERMES) or MDM complex, composed of MMM1, MDM10, MDM12 and MDM34. An MMM1 homodimer associates with one molecule of MDM12 on each side in a pairwise head-to-tail manner, and the SMP-LTD domains of MMM1 and MDM12 generate a continuous hydrophobic tunnel for phospholipid trafficking.

The protein localises to the mitochondrion outer membrane. The protein resides in the endoplasmic reticulum membrane. Component of the ERMES/MDM complex, which serves as a molecular tether to connect the endoplasmic reticulum (ER) and mitochondria. Components of this complex are involved in the control of mitochondrial shape and protein biogenesis, and function in nonvesicular lipid trafficking between the ER and mitochondria. MDM12 is required for the interaction of the ER-resident membrane protein MMM1 and the outer mitochondrial membrane-resident beta-barrel protein MDM10. The MDM12-MMM1 subcomplex functions in the major beta-barrel assembly pathway that is responsible for biogenesis of all mitochondrial outer membrane beta-barrel proteins, and acts in a late step after the SAM complex. The MDM10-MDM12-MMM1 subcomplex further acts in the TOM40-specific pathway after the action of the MDM12-MMM1 complex. Essential for establishing and maintaining the structure of mitochondria and maintenance of mtDNA nucleoids. In Candida albicans (strain WO-1) (Yeast), this protein is Mitochondrial distribution and morphology protein 12.